The sequence spans 984 residues: MDTFKRWLNKPKADDKSLLARFFHADRSLTAVASELDSFDGRAEPDRCTRLVSRLRQNQDKVLAITNLIMEELLGEDRDPRAFRAKFPEEVLQENLAGQLWFGAECLAAGSSIMNRETESKEMRPLAQAVTKSLGNVRVLLRDQCLKNNVPNSKTLHLDLNDSTTEQLYESLKIFDRLFAEFELSYVSAMVQVKSRHEYEMQQWIGVLFSETLQRALKIGLLDQEMVDAFDPGLMFSIPRLAIVAGLVVYAKGPLNMDMPGDQLSEMFRPFRTILIKIRDLLRNLNNQELYQLEKLLCTNEDINTKVPLGSSSIEAPSPEHSAHPTTSSSQNNNNSSNNNHSSSSSTTTTMGTTSTHRTVERLVDQRNNNHNSNSNSSTNPTVEGATLRSPSMLSLSPTSTPTASPAPSPTPSHSIASTSSAATSSTNPPADWSDGDDEDEDDDDIEVDEEDLESSDDDTDEEQLLKDIVAADCASGYLIPNTNLGNLLQPQEVPLTDNFVASEDDEYGTTEQQGHQGLEEEEPSTSAAMLAATRTLQRLRLPSSDTEPLAEPTTIKATEEHMQQPSGRHRESHSHRHHQRHHHHHHHRHSHQHQHRQPHPHRTTRSGRKRCSLEAVDPETIQPEREQNLASGDTSAASSLSDDVSLAMRNTTARLKFKSTENLLHRLFVCIAGVADQLQTNFASDLRQILRSVFLMNMSSAQEEIDIPEKTKESELFEFRASENDVIQESAGSNQSIYSAEEVNPELDNVFSAGGGNQATGQRHSAGASMQRNNTIDLANQPGEGSPSGATMATSRSHVTRSRSLGDQEAASSATSSTAHLRQQEQQQQHQQLQIQLQRQRNNSVGSNTPSSASSTSSSSEQNSPVSARSGSRRRLQSNNETQMPSSATSTSATLSPPAWIPDGKAPRCMACQTPFTAFRRRHHCRNCGGVFCGVCSNASAPLPKYGLTKAVRVCRDCYVREVRSGMGVQGVQRVQSVQASAS.

Disordered regions lie at residues 308–462 (PLGS…DTDE), 508–527 (YGTT…PSTS), 539–642 (RLRL…SSLS), and 749–900 (DNVF…SPPA). 4 stretches are compositionally biased toward low complexity: residues 326-356 (TTSS…TTST), 369-380 (NNHNSNSNSSTN), 387-404 (TLRS…TPTA), and 412-433 (PSHS…PADW). Residues 434-462 (SDGDDEDEDDDDIEVDEEDLESSDDDTDE) are compositionally biased toward acidic residues. Phosphoserine occurs at positions 544 and 545. A compositionally biased stretch (basic residues) spans 571 to 611 (RESHSHRHHQRHHHHHHHRHSHQHQHRQPHPHRTTRSGRKR). The segment covering 630 to 642 (LASGDTSAASSLS) has biased composition (low complexity). Polar residues-rich tracts occupy residues 760–779 (ATGQ…TIDL) and 789–806 (SGAT…SRSL). Ser805 bears the Phosphoserine mark. 2 stretches are compositionally biased toward low complexity: residues 811 to 869 (AASS…PVSA) and 886 to 899 (PSSA…LSPP). Residues 904 to 964 (DGKAPRCMAC…VCRDCYVREV (61 aa)) form an FYVE-type zinc finger. Zn(2+) contacts are provided by Cys910, Cys913, Cys926, Cys929, Cys934, Cys937, Cys956, and Cys959.

It belongs to the lst-2 family.

In terms of biological role, negative regulator of epidermal growth factor receptor (EGFR) signaling. The protein is Lateral signaling target protein 2 homolog of Drosophila yakuba (Fruit fly).